Consider the following 470-residue polypeptide: ATP synthase subunit beta (470 aa).

Gly-155–Thr-162 is an ATP binding site.

Belongs to the ATPase alpha/beta chains family. As to quaternary structure, F-type ATPases have 2 components, CF(1) - the catalytic core - and CF(0) - the membrane proton channel. CF(1) has five subunits: alpha(3), beta(3), gamma(1), delta(1), epsilon(1). CF(0) has three main subunits: a(1), b(2) and c(9-12). The alpha and beta chains form an alternating ring which encloses part of the gamma chain. CF(1) is attached to CF(0) by a central stalk formed by the gamma and epsilon chains, while a peripheral stalk is formed by the delta and b chains.

Its subcellular location is the cell membrane. It carries out the reaction ATP + H2O + 4 H(+)(in) = ADP + phosphate + 5 H(+)(out). Functionally, produces ATP from ADP in the presence of a proton gradient across the membrane. The catalytic sites are hosted primarily by the beta subunits. In Staphylococcus epidermidis (strain ATCC 35984 / DSM 28319 / BCRC 17069 / CCUG 31568 / BM 3577 / RP62A), this protein is ATP synthase subunit beta.